A 274-amino-acid polypeptide reads, in one-letter code: 26S proteasome regulatory subunit RPN12 (274 aa).

The PCI domain maps to 76–251; it reads DSFENYFNQL…KADYEDEMMH (176 aa).

This sequence belongs to the proteasome subunit S14 family.

Acts as a regulatory subunit of the 26S proteasome which is involved in the ATP-dependent degradation of ubiquitinated proteins. Necessary for activation of the CDC28 kinase. The polypeptide is 26S proteasome regulatory subunit RPN12 (RPN12) (Saccharomyces cerevisiae (strain ATCC 204508 / S288c) (Baker's yeast)).